The sequence spans 134 residues: MSWQTYVDDHLMCDIEGHEGHRLIAAAIVGHDGSVWAQSATFPQFKPEEMNGIMTDFNEPGHLAPTGLHLGGTKYMVIQGEAGAVIRGKKGSGGITIKKTGQALVCGIYEEPVTPGQCNMVVERLGDYLLEQGL.

An intrachain disulfide couples Cys13 to Cys118. Residues 84–100 (AVIRGKKGSGGITIKKT) carry the Involved in PIP2 interaction motif. Thr114 bears the Phosphothreonine mark.

It belongs to the profilin family. Occurs in many kinds of cells as a complex with monomeric actin in a 1:1 ratio. In terms of processing, phosphorylated by MAP kinases.

The protein localises to the cytoplasm. It is found in the cytoskeleton. Binds to actin and affects the structure of the cytoskeleton. At high concentrations, profilin prevents the polymerization of actin, whereas it enhances it at low concentrations. In Olea europaea (Common olive), this protein is Profilin-2.